A 365-amino-acid chain; its full sequence is tRNA/tmRNA (uracil-C(5))-methyltransferase (365 aa).

S-adenosyl-L-methionine contacts are provided by Gln189, Tyr217, Asn222, Glu238, and Asp298. Cys323 functions as the Nucleophile in the catalytic mechanism. The active-site Proton acceptor is the Glu357.

The protein belongs to the class I-like SAM-binding methyltransferase superfamily. RNA M5U methyltransferase family. TrmA subfamily.

It carries out the reaction uridine(54) in tRNA + S-adenosyl-L-methionine = 5-methyluridine(54) in tRNA + S-adenosyl-L-homocysteine + H(+). The enzyme catalyses uridine(341) in tmRNA + S-adenosyl-L-methionine = 5-methyluridine(341) in tmRNA + S-adenosyl-L-homocysteine + H(+). Its function is as follows. Dual-specificity methyltransferase that catalyzes the formation of 5-methyluridine at position 54 (m5U54) in all tRNAs, and that of position 341 (m5U341) in tmRNA (transfer-mRNA). The chain is tRNA/tmRNA (uracil-C(5))-methyltransferase from Shewanella sp. (strain ANA-3).